A 681-amino-acid polypeptide reads, in one-letter code: Terpene synthase 6, chloroplastic (681 aa).

Mg(2+) is bound by residues aspartate 433, aspartate 437, asparagine 577, and glutamate 585. Residues aspartate 433–aspartate 437 carry the DDXXD motif motif.

Belongs to the terpene synthase family. Requires Mg(2+) as cofactor. Expressed in leaves.

It localises to the plastid. Its subcellular location is the chloroplast. The protein operates within secondary metabolite biosynthesis; terpenoid biosynthesis. May be involved in the biosynthesis of ent-kaurene diterpenoids natural products such as oridonin, miltiradiene, eriocalyxin B and nezukol, known to exhibit antitumor, anti-inflammatory and antibacterial activities. This Isodon rubescens (Rabdosia rubescens) protein is Terpene synthase 6, chloroplastic.